A 417-amino-acid chain; its full sequence is UDP-N-acetylglucosamine 1-carboxyvinyltransferase (417 aa).

22–23 (KN) lines the phosphoenolpyruvate pocket. UDP-N-acetyl-alpha-D-glucosamine is bound at residue R93. The active-site Proton donor is the C117. A 2-(S-cysteinyl)pyruvic acid O-phosphothioketal modification is found at C117. Residues 122–126 (RPVDL), D305, and I327 contribute to the UDP-N-acetyl-alpha-D-glucosamine site.

It belongs to the EPSP synthase family. MurA subfamily.

The protein resides in the cytoplasm. The catalysed reaction is phosphoenolpyruvate + UDP-N-acetyl-alpha-D-glucosamine = UDP-N-acetyl-3-O-(1-carboxyvinyl)-alpha-D-glucosamine + phosphate. It functions in the pathway cell wall biogenesis; peptidoglycan biosynthesis. Its function is as follows. Cell wall formation. Adds enolpyruvyl to UDP-N-acetylglucosamine. The sequence is that of UDP-N-acetylglucosamine 1-carboxyvinyltransferase from Thiobacillus denitrificans (strain ATCC 25259 / T1).